We begin with the raw amino-acid sequence, 311 residues long: HPr kinase/phosphorylase (311 aa).

Residues His-138 and Lys-159 contribute to the active site. Residue 153 to 160 (GKSGVGKS) participates in ATP binding. Ser-160 is a Mg(2+) binding site. Asp-177 (proton acceptor; for phosphorylation activity. Proton donor; for dephosphorylation activity) is an active-site residue. The interval 201 to 210 (LEIRGLGIIN) is important for the catalytic mechanism of both phosphorylation and dephosphorylation. Glu-202 serves as a coordination point for Mg(2+). The active site involves Arg-243. Positions 264-269 (PVRPGR) are important for the catalytic mechanism of dephosphorylation.

Belongs to the HPrK/P family. As to quaternary structure, homohexamer. It depends on Mg(2+) as a cofactor.

The enzyme catalyses [HPr protein]-L-serine + ATP = [HPr protein]-O-phospho-L-serine + ADP + H(+). It catalyses the reaction [HPr protein]-O-phospho-L-serine + phosphate + H(+) = [HPr protein]-L-serine + diphosphate. Catalyzes the ATP- as well as the pyrophosphate-dependent phosphorylation of a specific serine residue in HPr, a phosphocarrier protein of the phosphoenolpyruvate-dependent sugar phosphotransferase system (PTS). HprK/P also catalyzes the pyrophosphate-producing, inorganic phosphate-dependent dephosphorylation (phosphorolysis) of seryl-phosphorylated HPr (P-Ser-HPr). The two antagonistic activities of HprK/P are regulated by several intracellular metabolites, which change their concentration in response to the absence or presence of rapidly metabolisable carbon sources (glucose, fructose, etc.) in the growth medium. Also phosphorylates/dephosphorylates the HPr-like catabolite repression protein crh on a specific serine residue. Therefore, by controlling the phosphorylation state of HPr and crh, HPrK/P is a sensor enzyme that plays a major role in the regulation of carbon metabolism and sugar transport: it mediates carbon catabolite repression (CCR), and regulates PTS-catalyzed carbohydrate uptake and inducer exclusion. The sequence is that of HPr kinase/phosphorylase from Geobacillus kaustophilus (strain HTA426).